Consider the following 309-residue polypeptide: Uracil phosphoribosyltransferase homolog (309 aa).

The segment at 1 to 38 (MATELQCPDSMPCHNQQVNSASTPSPEQLRPGDLILDH) is disordered. Residues 13–26 (CHNQQVNSASTPSP) show a composition bias toward polar residues. Position 25 is a phosphoserine (Ser-25). GTP-binding positions include Arg-133, Arg-142, and 176–179 (EKGN). A 5-phospho-alpha-D-ribose 1-diphosphate-binding site is contributed by Arg-186. 2 residues coordinate GTP: Arg-203 and Arg-232. 238 to 246 (YPILSTGNT) is a 5-phospho-alpha-D-ribose 1-diphosphate binding site. Residue 299 to 301 (THF) participates in uracil binding.

Belongs to the UPRTase family. As to expression, highly expressed in leukocytes, liver, spleen and thymus, with lower expression in brain, lung and skeletal muscle.

The protein localises to the cytoplasm. The protein resides in the nucleus. This Homo sapiens (Human) protein is Uracil phosphoribosyltransferase homolog (UPRT).